The chain runs to 81 residues: ATP synthase subunit c, chloroplastic (81 aa).

The next 2 membrane-spanning stretches (helical) occupy residues 3–23 (PIISAASVIAAGLAVGLASIG) and 57–77 (LAFMEALTIYGLVVALALLFA).

Belongs to the ATPase C chain family. In terms of assembly, F-type ATPases have 2 components, F(1) - the catalytic core - and F(0) - the membrane proton channel. F(1) has five subunits: alpha(3), beta(3), gamma(1), delta(1), epsilon(1). F(0) has four main subunits: a(1), b(1), b'(1) and c(10-14). The alpha and beta chains form an alternating ring which encloses part of the gamma chain. F(1) is attached to F(0) by a central stalk formed by the gamma and epsilon chains, while a peripheral stalk is formed by the delta, b and b' chains.

The protein resides in the plastid. Its subcellular location is the chloroplast thylakoid membrane. F(1)F(0) ATP synthase produces ATP from ADP in the presence of a proton or sodium gradient. F-type ATPases consist of two structural domains, F(1) containing the extramembraneous catalytic core and F(0) containing the membrane proton channel, linked together by a central stalk and a peripheral stalk. During catalysis, ATP synthesis in the catalytic domain of F(1) is coupled via a rotary mechanism of the central stalk subunits to proton translocation. Functionally, key component of the F(0) channel; it plays a direct role in translocation across the membrane. A homomeric c-ring of between 10-14 subunits forms the central stalk rotor element with the F(1) delta and epsilon subunits. The protein is ATP synthase subunit c, chloroplastic of Phaseolus vulgaris (Kidney bean).